Consider the following 286-residue polypeptide: Pantothenate synthetase (286 aa).

30–37 is an ATP binding site; that stretch reads MGNLHEGH. The active-site Proton donor is H37. Q64 provides a ligand contact to (R)-pantoate. Position 64 (Q64) interacts with beta-alanine. Position 151 to 154 (151 to 154) interacts with ATP; that stretch reads GKKD. A (R)-pantoate-binding site is contributed by Q157. Residues L180 and 188-191 each bind ATP; that span reads LSSR.

This sequence belongs to the pantothenate synthetase family. In terms of assembly, homodimer.

The protein resides in the cytoplasm. The catalysed reaction is (R)-pantoate + beta-alanine + ATP = (R)-pantothenate + AMP + diphosphate + H(+). Its pathway is cofactor biosynthesis; (R)-pantothenate biosynthesis; (R)-pantothenate from (R)-pantoate and beta-alanine: step 1/1. Catalyzes the condensation of pantoate with beta-alanine in an ATP-dependent reaction via a pantoyl-adenylate intermediate. The sequence is that of Pantothenate synthetase from Leptothrix cholodnii (strain ATCC 51168 / LMG 8142 / SP-6) (Leptothrix discophora (strain SP-6)).